Reading from the N-terminus, the 153-residue chain is Pheromone-binding protein Gp-9 (153 aa).

The signal sequence occupies residues 1-19 (MKTFVLHIFIFAFVAFASA). 3 cysteine pairs are disulfide-bonded: Cys37/Cys77, Cys73/Cys129, and Cys118/Cys138.

It belongs to the PBP/GOBP family. Homodimer.

The protein resides in the secreted. Colony queen number, a major feature of social organization, is associated with worker genotype for Gp-9. Colonies are headed by either a single reproductive queen (monogyne form) or multiple queens (polygyne form). Differences in worker Gp-9 genotypes between social forms may cause differences in workers' abilities to recognize queens and regulate their numbers. This is Pheromone-binding protein Gp-9 from Solenopsis amblychila (Desert fire ant).